A 589-amino-acid polypeptide reads, in one-letter code: Type I restriction enzyme EcoAI specificity subunit (589 aa).

The protein belongs to the type-I restriction system S methylase family. As to quaternary structure, the type I restriction/modification system is composed of three polypeptides R, M and S. The restriction enzyme has stoichiometry R(2)M(2)S(1) while the methyltransferase is M(2)S(1).

Functionally, the specificity (S) subunit of a type I restriction enzyme; this subunit dictates DNA sequence specificity. The M and S subunits together form a methyltransferase (MTase) that methylates A-2 on the top strand and A-3 on the bottom strand of the sequence 5'-GAGN(7)GTCA-3'. In the presence of the R subunit the complex can also act as an endonuclease, binding to the same target sequence but cutting the DNA some distance from this site. Whether the DNA is cut or modified depends on the methylation state of the target sequence. When the target site is unmodified, the DNA is cut. When the target site is hemimethylated, the complex acts as a maintenance MTase modifying the DNA so that both strands become methylated. After locating a non-methylated recognition site, the enzyme complex serves as a molecular motor that translocates DNA in an ATP-dependent manner until a collision occurs that triggers cleavage. This is Type I restriction enzyme EcoAI specificity subunit from Escherichia coli.